Consider the following 659-residue polypeptide: Cyclic-di-AMP phosphodiesterase GdpP (659 aa).

Topologically, residues 1 to 8 are cytoplasmic; that stretch reads MPSFYEKP. The next 2 helical transmembrane spans lie at 9–29 and 30–50; these read LFRY…LISF and YFNW…LFFI. The Cytoplasmic segment spans residues 51-659; that stretch reads KRADSLIRQE…DEYFEGGVQR (609 aa). A PAS-like domain, required for heme-binding region spans residues 84–149; that stretch reads PIGIMLFNDQ…NDRKFRVVIK (66 aa). Residues 173 to 301 enclose the GGDEF domain; it reads ERTVLAYIFL…GGDQVAIKLP (129 aa). The interval 339–496 is DHH domain; that stretch reads NVIIMGHKFP…IEATALLAGI (158 aa). Positions 345, 349, 351, 420, 444, and 499 each coordinate Mn(2+). A DHHA1 domain region spans residues 591 to 646; the sequence is FAVARRDEQTVCISARSLGEVNVQIIMEALEGGGHLTNAATQLSGISVSEALERLK.

It belongs to the GdpP/PdeA phosphodiesterase family. Requires heme b as cofactor. The cofactor is Mg(2+). Mn(2+) serves as cofactor.

Its subcellular location is the cell membrane. It catalyses the reaction 3',3'-c-di-AMP + H2O = 5'-O-phosphonoadenylyl-(3'-&gt;5')-adenosine + H(+). Phosphodiesterase (PDE) inhibited by Zn(2+), Ca(2+) inhibits in the presence of Mg(2+) but not Mn(2+); c-di-AMP PDE activity is competitively inhibited by ppGpp. Heme binding (by Fe(2+) or Fe(3+) heme) inhibits PDE, activity is partially restored by KCN or NO only for Fe(2+) heme. Binding of NO to Fe(2+) heme switches from hexa- to pentacoordination. Heme binding inhibits the ATPase activity. In terms of biological role, has phosphodiesterase (PDE) activity against cyclic-di-AMP (c-di-AMP) and to a much lesser extent against cyclic-di-GMP (c-di-GMP) in the DHH/DHHA1 domains. Also has ATPase activity, probably via the GGDEF domain. Overexpression leads to increased sensitivity to methyl methanesulfonate (MMS) and H(2)O(2). Overexpression leads to extreme sensitivity to the beta-lactam antibiotic cefuroxime (CEF), probably dependent on PDE activity. May monitor cellular heme or NO levels. In B.subtilis c-di-AMP is a second messenger that mediates growth, DNA repair and cell wall homeostasis; it is toxic when present in excess. This Bacillus subtilis (strain 168) protein is Cyclic-di-AMP phosphodiesterase GdpP.